The primary structure comprises 322 residues: Arginase (322 aa).

Residues H113, D141, H143, and D145 each contribute to the Mn(2+) site. Residues 143–147 (HADIN), 154–156 (SGN), and D200 contribute to the substrate site. Residues D247 and D249 each coordinate Mn(2+). Substrate is bound by residues T261 and E292.

Belongs to the arginase family. Homotrimer. Mn(2+) serves as cofactor.

The enzyme catalyses L-arginine + H2O = urea + L-ornithine. The protein operates within nitrogen metabolism; urea cycle; L-ornithine and urea from L-arginine: step 1/1. This Coccidioides posadasii (strain C735) (Valley fever fungus) protein is Arginase (ARG).